Consider the following 78-residue polypeptide: Acyl carrier protein (78 aa).

The Carrier domain maps to 2–77 (SDIADRVKKI…DAIKFLEKNS (76 aa)). Ser-37 carries the O-(pantetheine 4'-phosphoryl)serine modification.

It belongs to the acyl carrier protein (ACP) family. 4'-phosphopantetheine is transferred from CoA to a specific serine of apo-ACP by AcpS. This modification is essential for activity because fatty acids are bound in thioester linkage to the sulfhydryl of the prosthetic group.

It localises to the cytoplasm. Its pathway is lipid metabolism; fatty acid biosynthesis. Carrier of the growing fatty acid chain in fatty acid biosynthesis. This is Acyl carrier protein from Methylobacterium sp. (strain 4-46).